The sequence spans 108 residues: Insulin (108 aa).

Positions 1 to 24 are cleaved as a signal peptide; it reads MALWTRLLPLLALLALWAPAPAQA. Disulfide bonds link Cys-31–Cys-94, Cys-43–Cys-107, and Cys-93–Cys-98. The propeptide at 57–85 is c peptide; the sequence is EAENPQAGAVELGGGLGGLQALALEGPPQ.

It belongs to the insulin family. In terms of assembly, heterodimer of a B chain and an A chain linked by two disulfide bonds.

The protein localises to the secreted. Functionally, insulin decreases blood glucose concentration. It increases cell permeability to monosaccharides, amino acids and fatty acids. It accelerates glycolysis, the pentose phosphate cycle, and glycogen synthesis in liver. This is Insulin (INS) from Sus scrofa (Pig).